A 1306-amino-acid chain; its full sequence is Putative late blight resistance protein homolog R1A-10 (1306 aa).

Coiled-coil stretches lie at residues 407 to 428 and 520 to 542; these read SDSLAFLKNQLQVIQTEFESLQ and PRMKEEIVGFEDVIENLRKKLLS. The region spanning 521-808 is the NB-ARC domain; sequence RMKEEIVGFE…SEAFIKSSEG (288 aa). ATP is bound at residue 554–561; sequence GMPGLGKT. LRR repeat units follow at residues 858-881, 921-935, 936-961, 979-1007, 1010-1035, 1057-1081, 1082-1106, 1110-1129, 1130-1153, 1156-1181, and 1216-1240; these read AEENFLLWINRDQITKPSSCVYSH, LSSLHDFSISRILPN, FKFLKVLDLEHRVFIDFIPTELPYLR, LWNLETLILNRRSADSHNRVLLPSTVWDM, LRHLHIPNFSPENKKALLKNSPNLDD, TPNLRKLTCKVKCLEYLHQYHALNF, PIRLEILKLYRSNAFKAIPFCISAP, YLKLSGFYLDSQYLSKTADH, LKNLEVLKLYYVEFGDHREWKVSN, FPQLKILKLEDVSLMKWIVADDAFPN, and ESVVKSAMNIQETQVEDYQNTNFKL. An HMA domain is found at 1240–1306; it reads LVLIEKWPKF…KLRKCGMPGL (67 aa).

The protein belongs to the disease resistance NB-LRR family.

The protein localises to the cytoplasm. The protein resides in the membrane. Confers resistance to late blight (Phytophthora infestans) races carrying the avirulence gene Avr1. Resistance proteins guard the plant against pathogens that contain an appropriate avirulence protein via an indirect interaction with this avirulence protein. That triggers a defense system including the hypersensitive response, which restricts the pathogen growth. This Solanum demissum (Wild potato) protein is Putative late blight resistance protein homolog R1A-10 (R1A-10).